A 50-amino-acid chain; its full sequence is KFCEKPSGTWSGVCGNSGACKDQCIRLEGAKHGSCNYKPPAHRCICYYEC.

4 disulfide bridges follow: Cys3–Cys50, Cys14–Cys35, Cys20–Cys44, and Cys24–Cys46.

In terms of processing, contains 4 disulfide bonds.

The protein localises to the secreted. Antimicrobial peptide active against fungi, Gram-positive and Gram-negative bacteria. Inhibits growth of hyphae in the fungi A.niger (IC(50)=3.5 ug/ml), B.sorokiniana (IC(50)=3.0 ug/ml), F.oxysporum (IC(50)=9.5 ug/ml), F.graminearum (IC(50)=6.9 ug/ml), F.culmorum (IC(50)=6.9 ug/ml) and B.cinerea (IC(50)=27.4 ug/ml). Has no effect on spore germination. Destroys spores in germinated conidia by disruption of cell walls and membranes in A.niger and B.sorokiniana. Causes vacuolization of germinated macro- and microconidia in F.oxysporum, F.graminearum and F.culmorum. Strongly inhibits growth of P.infestans on potato tubers above concentrations of 13.6 ug/ml. Inhibits growth of Gram-positive bacteria C.michiganensis and B.subtilis and of Gram-negative bacteria P.syringae, E.carotovora and E.coli. The protein is Defensin D1 of Nigella sativa (Black cumin).